The primary structure comprises 571 residues: Endonuclease/exonuclease/phosphatase family domain-containing protein 1 (571 aa).

The disordered stretch occupies residues 1-20 (MGSTLGCHRSIPRDPSDLSH). Residue glycine 2 is the site of N-myristoyl glycine attachment. Residues 11 to 20 (IPRDPSDLSH) are compositionally biased toward basic and acidic residues. 3 positions are modified to phosphoserine: serine 16, serine 21, and serine 25. The HhH domain occupies 38–67 (ERLNINTATEEELMTLPGVTRAVARSIVEY). Serine 106, serine 110, serine 162, and serine 175 each carry phosphoserine. The interval 202-227 (SRPPSTHTNGGLTFTAKPHPSPTSLS) is disordered. Positions 204-213 (PPSTHTNGGL) are enriched in polar residues. Threonine 267 bears the Phosphothreonine mark. Phosphoserine is present on serine 430. The tract at residues 548–571 (RKEGPRSGNGLTLERSEANIKHER) is disordered. The span at 561-571 (ERSEANIKHER) shows a compositional bias: basic and acidic residues.

This Bos taurus (Bovine) protein is Endonuclease/exonuclease/phosphatase family domain-containing protein 1 (EEPD1).